A 60-amino-acid chain; its full sequence is Large ribosomal subunit protein bL32 (60 aa).

The protein belongs to the bacterial ribosomal protein bL32 family.

This is Large ribosomal subunit protein bL32 from Oenococcus oeni (strain ATCC BAA-331 / PSU-1).